The following is a 465-amino-acid chain: MKTNPLPATPSVWGGSTVELPPTTRDTAGQGLLRRVLRPPISRRDGPVLPRGSGPRRAASTLWLLGLDGTDAPPGALTPNDDTEQALDKILRGTMRGGAALIGSPRHHLTRQVILTDLCQPNADRAGTLLLALRHPADLPHLAHQRAPPGRQTERLGEAWGQLMEATALGSGRAESGCTRAGLVSFNFLVAACAASYDARDAADAVRAHVTANYRGTRVGARLDRFSECLRAMVHTHVFPHEVMRFFGGLVSWVTQDELASVTAVCAGPQEAAHTGHPGRPRSAVILPACAFVDLDAELGLGGPGAAFLYLVLTYRQRRDQELCCVYVIKSQLPPRGLEPALERLFGRLRITNTIHGTEDMTPPAPNRNPDFPLAGLAANPQTPRCSAGQVTNPQFADRLYRWQPDLRGRPTARTCTYAAFAELGMMPEDSPRCLHRTERFGAVTVPVVILEGVVWCPGEWRACA.

It belongs to the herpesviridae TRX1 protein family. Interacts with TRX2, MCP and capsid vertex component 2/CVC2.

Its subcellular location is the virion. The protein localises to the host nucleus. Functionally, structural component of the T=16 icosahedral capsid. The capsid is composed of pentamers and hexamers of major capsid protein/MCP, which are linked together by heterotrimers called triplexes. These triplexes are formed by a single molecule of triplex protein 1/TRX1 and two copies of triplex protein 2/TRX2. Additionally, TRX1 is required for efficient transport of TRX2 to the nucleus, which is the site of capsid assembly. This Homo sapiens (Human) protein is Triplex capsid protein 1.